The following is a 353-amino-acid chain: ATPase GET3A (353 aa).

27-34 serves as a coordination point for ATP; it reads KGGVGKTT. Residue aspartate 56 is part of the active site. Residues glutamate 226 and asparagine 253 each coordinate ATP. Residues 320–353 are a coiled coil; the sequence is TTSRSNVEELERKVHTLRLQLKTAEEELERVKSG.

It belongs to the arsA ATPase family. In terms of assembly, homodimer. Interacts with GET1 and GET4.

It is found in the cytoplasm. The protein localises to the cytosol. Its subcellular location is the endoplasmic reticulum. The catalysed reaction is ATP + H2O = ADP + phosphate + H(+). Its function is as follows. ATPase required for the post-translational delivery of tail-anchored (TA) proteins to the endoplasmic reticulum. Recognizes and selectively binds the transmembrane domain of TA proteins in the cytosol. This complex then targets to the endoplasmic reticulum by membrane-bound receptors, where the tail-anchored protein is released for insertion. This process is regulated by ATP binding and hydrolysis. ATP binding drives the homodimer towards the closed dimer state, facilitating recognition of newly synthesized TA membrane proteins. ATP hydrolysis is required for insertion. Subsequently, the homodimer reverts towards the open dimer state, lowering its affinity for the membrane-bound receptor, and returning it to the cytosol to initiate a new round of targeting. Involved in the control of root hair growth through the regulation of syntaxin SYP123 expression. This chain is ATPase GET3A, found in Arabidopsis thaliana (Mouse-ear cress).